The chain runs to 844 residues: Probable serine/threonine-protein kinase DDB_G0267566 (844 aa).

ANK repeat units follow at residues 335 to 367 and 371 to 400; these read KGDTALHNTIKNLKKESGPMVAALLSCGANANI and KHKVPLHFAIEFGDESIIKILLAFGAKPFL. The 266-residue stretch at 508 to 773 folds into the Protein kinase domain; sequence SELGKLIGKG…FEVFQKLKKV (266 aa). Residues 514–522 and lysine 539 contribute to the ATP site; that span reads IGKGANGKV. Aspartate 634 acts as the Proton acceptor in catalysis.

The protein belongs to the protein kinase superfamily. Ser/Thr protein kinase family.

The catalysed reaction is L-seryl-[protein] + ATP = O-phospho-L-seryl-[protein] + ADP + H(+). The enzyme catalyses L-threonyl-[protein] + ATP = O-phospho-L-threonyl-[protein] + ADP + H(+). In Dictyostelium discoideum (Social amoeba), this protein is Probable serine/threonine-protein kinase DDB_G0267566.